The sequence spans 325 residues: Tetraacyldisaccharide 4'-kinase (325 aa).

54–61 (SVGGTGKT) serves as a coordination point for ATP.

This sequence belongs to the LpxK family.

The enzyme catalyses a lipid A disaccharide + ATP = a lipid IVA + ADP + H(+). It functions in the pathway glycolipid biosynthesis; lipid IV(A) biosynthesis; lipid IV(A) from (3R)-3-hydroxytetradecanoyl-[acyl-carrier-protein] and UDP-N-acetyl-alpha-D-glucosamine: step 6/6. Transfers the gamma-phosphate of ATP to the 4'-position of a tetraacyldisaccharide 1-phosphate intermediate (termed DS-1-P) to form tetraacyldisaccharide 1,4'-bis-phosphate (lipid IVA). The polypeptide is Tetraacyldisaccharide 4'-kinase (Rickettsia felis (strain ATCC VR-1525 / URRWXCal2) (Rickettsia azadi)).